Reading from the N-terminus, the 138-residue chain is Large ribosomal subunit protein uL16 (138 aa).

Belongs to the universal ribosomal protein uL16 family. In terms of assembly, part of the 50S ribosomal subunit.

In terms of biological role, binds 23S rRNA and is also seen to make contacts with the A and possibly P site tRNAs. This chain is Large ribosomal subunit protein uL16, found in Neisseria gonorrhoeae (strain ATCC 700825 / FA 1090).